The following is a 112-amino-acid chain: Protein GAST1 (112 aa).

An N-terminal signal peptide occupies residues 1–25; that stretch reads MAGKMSIVLFVLLVVFLTQNQVSRA.

This sequence belongs to the GASA family. Post-translationally, six disulfide bonds may be present. As to expression, all shoot organs.

Its subcellular location is the secreted. The sequence is that of Protein GAST1 (GAST1) from Solanum lycopersicum (Tomato).